We begin with the raw amino-acid sequence, 263 residues long: Mediator of RNA polymerase II transcription subunit 4 (263 aa).

Residues 61–111 (LQLAAEQAGIEKNMDALREQVRKQDEEINQLQRQLKEAEQILATSIFQARQ) are a coiled coil. 2 disordered regions span residues 209–228 (APNQ…MGAG) and 235–263 (DTRA…SDSQ). Positions 251 to 263 (STESSSSSSSDSQ) are enriched in low complexity.

This sequence belongs to the Mediator complex subunit 4 family. Component of the Mediator complex.

The protein resides in the nucleus. In terms of biological role, component of the Mediator complex, a coactivator involved in the regulated transcription of nearly all RNA polymerase II-dependent genes. Mediator functions as a bridge to convey information from gene-specific regulatory proteins to the basal RNA polymerase II transcription machinery. Mediator is recruited to promoters by direct interactions with regulatory proteins and serves as a scaffold for the assembly of a functional preinitiation complex with RNA polymerase II and the general transcription factors. In Anopheles gambiae (African malaria mosquito), this protein is Mediator of RNA polymerase II transcription subunit 4 (MED4).